A 496-amino-acid polypeptide reads, in one-letter code: Hexokinase-2 (496 aa).

A helical membrane pass occupies residues Ala-4–Met-24. The Hexokinase domain occupies Ala-35 to Ala-487. A hexokinase small subdomain region spans residues Thr-90–Val-228. ADP contacts are provided by Gly-104, Thr-105, and Asn-106. Positions 194, 195, 229, and 230 each coordinate D-glucose. The tract at residues Asn-229–Asp-476 is hexokinase large subdomain. Position 253 (Thr-253) interacts with ADP. Residues Asn-256, Glu-284, and Glu-315 each coordinate D-glucose. An ADP-binding site is contributed by Gly-441.

It belongs to the hexokinase family.

Its subcellular location is the plastid. It localises to the chloroplast outer membrane. The enzyme catalyses a D-hexose + ATP = a D-hexose 6-phosphate + ADP + H(+). It carries out the reaction D-fructose + ATP = D-fructose 6-phosphate + ADP + H(+). It catalyses the reaction D-glucose + ATP = D-glucose 6-phosphate + ADP + H(+). It participates in carbohydrate metabolism; hexose metabolism. It functions in the pathway carbohydrate degradation; glycolysis; D-glyceraldehyde 3-phosphate and glycerone phosphate from D-glucose: step 1/4. Functionally, fructose and glucose phosphorylating enzyme. May be involved in the phosphorylation of glucose during the export from plastids to cytosol. Seems neither to be involved in cell sugar sensing nor in carbohydrate metabolism in tuber. The sequence is that of Hexokinase-2 (HXK2) from Solanum tuberosum (Potato).